A 505-amino-acid chain; its full sequence is ATP synthase subunit alpha (505 aa).

Residue 171–178 participates in ATP binding; it reads GDRQTGKT.

This sequence belongs to the ATPase alpha/beta chains family. As to quaternary structure, F-type ATPases have 2 components, CF(1) - the catalytic core - and CF(0) - the membrane proton channel. CF(1) has five subunits: alpha(3), beta(3), gamma(1), delta(1), epsilon(1). CF(0) has three main subunits: a(1), b(2) and c(9-12). The alpha and beta chains form an alternating ring which encloses part of the gamma chain. CF(1) is attached to CF(0) by a central stalk formed by the gamma and epsilon chains, while a peripheral stalk is formed by the delta and b chains.

The protein localises to the cell inner membrane. The catalysed reaction is ATP + H2O + 4 H(+)(in) = ADP + phosphate + 5 H(+)(out). Produces ATP from ADP in the presence of a proton gradient across the membrane. The alpha chain is a regulatory subunit. This is ATP synthase subunit alpha from Campylobacter fetus subsp. fetus (strain 82-40).